We begin with the raw amino-acid sequence, 76 residues long: UPF0291 protein BCE_1981 (76 aa).

The protein belongs to the UPF0291 family.

Its subcellular location is the cytoplasm. This is UPF0291 protein BCE_1981 from Bacillus cereus (strain ATCC 10987 / NRS 248).